The chain runs to 340 residues: Biotin synthase (340 aa).

In terms of domain architecture, Radical SAM core spans Ser-53–Arg-280. [4Fe-4S] cluster is bound by residues Cys-68, Cys-72, and Cys-75. Residues Cys-112, Cys-143, Cys-203, and Arg-275 each coordinate [2Fe-2S] cluster.

Belongs to the radical SAM superfamily. Biotin synthase family. In terms of assembly, homodimer. The cofactor is [4Fe-4S] cluster. [2Fe-2S] cluster serves as cofactor.

It carries out the reaction (4R,5S)-dethiobiotin + (sulfur carrier)-SH + 2 reduced [2Fe-2S]-[ferredoxin] + 2 S-adenosyl-L-methionine = (sulfur carrier)-H + biotin + 2 5'-deoxyadenosine + 2 L-methionine + 2 oxidized [2Fe-2S]-[ferredoxin]. It participates in cofactor biosynthesis; biotin biosynthesis; biotin from 7,8-diaminononanoate: step 2/2. In terms of biological role, catalyzes the conversion of dethiobiotin (DTB) to biotin by the insertion of a sulfur atom into dethiobiotin via a radical-based mechanism. The polypeptide is Biotin synthase (Bordetella petrii (strain ATCC BAA-461 / DSM 12804 / CCUG 43448)).